A 287-amino-acid polypeptide reads, in one-letter code: Ribonuclease Z (287 aa).

Positions 64, 66, 68, 69, 124, 191, and 250 each coordinate Zn(2+). D68 functions as the Proton acceptor in the catalytic mechanism.

This sequence belongs to the RNase Z family. As to quaternary structure, homodimer. It depends on Zn(2+) as a cofactor.

It carries out the reaction Endonucleolytic cleavage of RNA, removing extra 3' nucleotides from tRNA precursor, generating 3' termini of tRNAs. A 3'-hydroxy group is left at the tRNA terminus and a 5'-phosphoryl group is left at the trailer molecule.. Zinc phosphodiesterase, which displays some tRNA 3'-processing endonuclease activity. Probably involved in tRNA maturation, by removing a 3'-trailer from precursor tRNA. In Pyrobaculum aerophilum (strain ATCC 51768 / DSM 7523 / JCM 9630 / CIP 104966 / NBRC 100827 / IM2), this protein is Ribonuclease Z.